The following is a 139-amino-acid chain: Putative pre-16S rRNA nuclease (139 aa).

This sequence belongs to the YqgF nuclease family.

Its subcellular location is the cytoplasm. Its function is as follows. Could be a nuclease involved in processing of the 5'-end of pre-16S rRNA. This is Putative pre-16S rRNA nuclease from Streptococcus pneumoniae (strain JJA).